The primary structure comprises 787 residues: ABC transporter G family member 5 (787 aa).

Basic and acidic residues predominate over residues 1-17 (MSRFVDKLPLFDRRPSP). Disordered stretches follow at residues 1–25 (MSRF…EGLP) and 71–116 (NDAR…EGQP). Residues 74–85 (RSGSSTPISSPR) show a composition bias toward polar residues. Positions 121–382 (LKFTDLTYSV…FLDFGKPIPD (262 aa)) constitute an ABC transporter domain. An ATP-binding site is contributed by 175–182 (GASGSGKS). The 208-residue stretch at 484 to 691 (GVLTRRAFIN…PYEAVMQNEF (208 aa)) folds into the ABC transmembrane type-2 domain. The next 8 membrane-spanning stretches (helical) occupy residues 500–520 (VFII…TIFW), 535–555 (FFAI…PVFL), 576–596 (VLSH…AFAL), 599–619 (FFSV…AIVL), 620–640 (ASFW…THVM), 641–661 (LGFP…GFFI), 728–745 (SLGV…GPDF), and 760–780 (LWIT…SLLL).

This sequence belongs to the ABC transporter superfamily. ABCG family. Eye pigment precursor importer (TC 3.A.1.204) subfamily. As to expression, expressed in the crown root primordia, endodermis, pericycle and stele in the root, in leaf primordia of main and axillary shoots, and in the vascular cells and leaf epidermis of older leaves.

It is found in the cell membrane. In terms of biological role, essential transporter for growth and development under abiotic stress. Mediates shoot branching by promoting the outgrowth of lateral shoots. Required for salt tolerance via Na/K homeostasis, at least partly by regulating SKC1/OsHKT1;5. Necessary for hypodermal suberization of roots, which contributes to formation of the apoplastic barrier. The polypeptide is ABC transporter G family member 5 (Oryza sativa subsp. japonica (Rice)).